The chain runs to 568 residues: Methionine--tRNA ligase (568 aa).

Residues 10–20 carry the 'HIGH' region motif; sequence PYVQSVPHLGN. Residues cysteine 143, cysteine 146, cysteine 156, and cysteine 159 each contribute to the Zn(2+) site. The 'KMSKS' region signature appears at 333-337; it reads KFSKS. Lysine 336 contacts ATP.

This sequence belongs to the class-I aminoacyl-tRNA synthetase family. MetG type 1 subfamily. Requires Zn(2+) as cofactor.

The protein localises to the cytoplasm. The catalysed reaction is tRNA(Met) + L-methionine + ATP = L-methionyl-tRNA(Met) + AMP + diphosphate. Functionally, is required not only for elongation of protein synthesis but also for the initiation of all mRNA translation through initiator tRNA(fMet) aminoacylation. This Metallosphaera sedula (strain ATCC 51363 / DSM 5348 / JCM 9185 / NBRC 15509 / TH2) protein is Methionine--tRNA ligase.